A 241-amino-acid polypeptide reads, in one-letter code: Ribonuclease HII (241 aa).

The region spanning 57–241 (NFIAGVDEAG…RTYVEKILKG (185 aa)) is the RNase H type-2 domain. A divalent metal cation-binding residues include D63, E64, and D155.

It belongs to the RNase HII family. Requires Mn(2+) as cofactor. The cofactor is Mg(2+).

It localises to the cytoplasm. It carries out the reaction Endonucleolytic cleavage to 5'-phosphomonoester.. In terms of biological role, endonuclease that specifically degrades the RNA of RNA-DNA hybrids. This is Ribonuclease HII from Caldanaerobacter subterraneus subsp. tengcongensis (strain DSM 15242 / JCM 11007 / NBRC 100824 / MB4) (Thermoanaerobacter tengcongensis).